The chain runs to 87 residues: MKTLLLTLVVVTIVCLDLGYTRTCLISPSSPPQTCPKGEDICIVKARCDEWCLRRGPLIERGCAATCPEFRSNYRSLLCCTTDNCNH.

A signal peptide spans 1 to 21; it reads MKTLLLTLVVVTIVCLDLGYT. Intrachain disulfides connect Cys-24/Cys-42, Cys-35/Cys-63, Cys-48/Cys-52, Cys-67/Cys-79, and Cys-80/Cys-85.

Belongs to the three-finger toxin family. Long-chain subfamily. Kappa-neurotoxin sub-subfamily. Homo- and heterodimer; non-covalently linked. In terms of tissue distribution, expressed by the venom gland.

It is found in the secreted. Its function is as follows. Postsynaptic neurotoxin that binds and inhibits neuronal nicotinic acetylcholine receptors (nAChR) with high affinity (IC(50)&lt;100 nM). Is a selective, and slowly reversible antagonist of alpha-3/CHRNA3-containing and some alpha-4/CHRNA4-containing AChRs. This chain is Kappa-4-bungarotoxin, found in Bungarus multicinctus (Many-banded krait).